The following is a 255-amino-acid chain: Ribonuclease HII (255 aa).

The RNase H type-2 domain occupies 72-255 (RLIAGVDEVG…KTFAPVQSFR (184 aa)). Residues Asp-78, Glu-79, and Asp-170 each contribute to the a divalent metal cation site.

This sequence belongs to the RNase HII family. The cofactor is Mn(2+). Mg(2+) serves as cofactor.

It is found in the cytoplasm. It catalyses the reaction Endonucleolytic cleavage to 5'-phosphomonoester.. In terms of biological role, endonuclease that specifically degrades the RNA of RNA-DNA hybrids. In Bacillus subtilis (strain 168), this protein is Ribonuclease HII (rnhB).